The sequence spans 961 residues: Retinoblastoma-related protein 1 (961 aa).

The segment at 404–606 is domain A; that stretch reads TPVSTAMTTA…EKGSSMYNSL (203 aa). Residues 404–819 form a pocket region; sequence TPVSTAMTTA…NEMFIPSVKP (416 aa). The segment at 607–728 is spacer; that stretch reads AVAKPSLAAE…PGGGGETCAE (122 aa). Residues 729–819 form a domain B region; it reads TAINVFFGKI…NEMFIPSVKP (91 aa). A disordered region spans residues 829–856; sequence NAEKNNHNDGQGPASPKPSPFPKLPDMS.

It belongs to the retinoblastoma protein (RB) family.

The protein localises to the nucleus. Regulator of biological processes that recruits a histone deacetylase to control gene transcription. May play a role in the entry into mitosis, negatively regulating the cell proliferation. Formation of stable complexes with geminiviridae replication-associated proteins may create a cellular environment which favors viral DNA replication. The sequence is that of Retinoblastoma-related protein 1 (RB1) from Nicotiana tabacum (Common tobacco).